Consider the following 162-residue polypeptide: MRHLVLIGFMGSGKSSLAQELGLALKLEVLDTDMIISERVGLSVREIFEELGEDNFRMFEKNLIDELKTLKTPHVISTGGGIIMHENLKGLGTTFYLKMDFETLIKRLNQKEREKRPLLNNLTQAKELFEKRQALYEKNASFIIDARGGLNNSLKQVLQFIA.

11–16 (GSGKSS) serves as a coordination point for ATP. Ser15 is a binding site for Mg(2+). 3 residues coordinate substrate: Asp33, Arg57, and Gly80. Position 116 (Arg116) interacts with ATP. Arg132 provides a ligand contact to substrate.

Belongs to the shikimate kinase family. As to quaternary structure, monomer. Requires Mg(2+) as cofactor.

It localises to the cytoplasm. It catalyses the reaction shikimate + ATP = 3-phosphoshikimate + ADP + H(+). It participates in metabolic intermediate biosynthesis; chorismate biosynthesis; chorismate from D-erythrose 4-phosphate and phosphoenolpyruvate: step 5/7. Catalyzes the specific phosphorylation of the 3-hydroxyl group of shikimic acid using ATP as a cosubstrate. The protein is Shikimate kinase of Helicobacter pylori (strain HPAG1).